A 567-amino-acid chain; its full sequence is MNMLNKKIYAEMYGPTVGDSVRLADTDLWVKIEKDFTIYGEEVKFGGGKVIRDGMGQGQMNNKECVDLVLTNAIIIDYWGVIKADIGINNGRIVGIGKSGNPDIQPGVTIYIGPGTEVISAEGKIVTAGGIDVHVHFICPQQIEEALSSGMTTLIGGGTGPTTGSNATTCTPGVWFISRMLQAADALPINIGFTGKGSSALPESLIEQIHAGAIGLKVHEDWGATPATIDCCLNVADNFDVQVSIHTDTLNESGFLETTISAIKNRTIHAYHVEGAGGGHSPDIIRICELNNVLPSSTNPTLPYTINTVDEHLDMMMVCHNLNCNLPEDIAFAESRIRRETIAAEDILHDLGALSMISSDSQAMGRIGETILRTWQTAHKMKLQRGSLLGDDQYNDNTRIKRYIAKYTINPAITHGIAHEVGSVEIGKLADLVLWSPVFFGVKPELIVKGGMIVSSVMGDPNASIPTPQPVYYRLMFGSYDLAKCATRMTFISQSSYDVGVVENLRLNSLIGISKRCRNIKKDHMINNNLKPVMEVDPQTYEVRANGELLVCEPVSVVPMSQRYFLF.

The Urease domain occupies 129–567; that stretch reads GGIDVHVHFI…VPMSQRYFLF (439 aa). Ni(2+)-binding residues include His134, His136, and Lys217. The residue at position 217 (Lys217) is an N6-carboxylysine. Position 219 (His219) interacts with substrate. The Ni(2+) site is built by His246 and His272. The Proton donor role is filled by His320. Residue Asp360 participates in Ni(2+) binding.

Belongs to the metallo-dependent hydrolases superfamily. Urease alpha subunit family. Heterotrimer of UreA (gamma), UreB (beta) and UreC (alpha) subunits. Three heterotrimers associate to form the active enzyme. Ni cation serves as cofactor. In terms of processing, carboxylation allows a single lysine to coordinate two nickel ions.

The protein resides in the cytoplasm. The enzyme catalyses urea + 2 H2O + H(+) = hydrogencarbonate + 2 NH4(+). The protein operates within nitrogen metabolism; urea degradation; CO(2) and NH(3) from urea (urease route): step 1/1. The sequence is that of Urease subunit alpha from Blochmanniella floridana.